Consider the following 456-residue polypeptide: TGACG-sequence-specific DNA-binding protein TGA-2.1 (456 aa).

Disordered stretches follow at residues 1 to 41 and 115 to 170; these read MASK…NTSR and SASG…QKTL. 2 stretches are compositionally biased toward polar residues: residues 9–41 and 125–141; these read GNRSGTTGMPSFISQIPVSNPMGTEANNTNTSR and GESNMADSGSRTDTSTD. The segment covering 158 to 169 has biased composition (basic and acidic residues); the sequence is DKSKEKVLDQKT. Residues 166–229 enclose the bZIP domain; the sequence is DQKTLRRLAQ…NIADQSNGVG (64 aa). A coiled-coil region spans residues 167–220; the sequence is QKTLRRLAQNREAARKSRLRKKAYVQQLENSRLKLSQLEQDLQRARQQGKYISN. Residues 168 to 188 are basic motif; the sequence is KTLRRLAQNREAARKSRLRKK. The leucine-zipper stretch occupies residues 194-208; that stretch reads LENSRLKLSQLEQDL. Residues 233–450 enclose the DOG1 domain; it reads PLAFDAEYSR…RALSSLWLAR (218 aa).

The protein belongs to the bZIP family. As to quaternary structure, can form heterodimer with TGA2.2.

Its subcellular location is the nucleus. Functionally, transcriptional activator that binds specifically to the DNA sequence 5'-TGACG-3'. Recognizes ocs elements like the as-1 motif of the cauliflower mosaic virus 35S promoter. Binding to the as-1-like cis elements mediate auxin- and salicylic acid-inducible transcription. This Nicotiana tabacum (Common tobacco) protein is TGACG-sequence-specific DNA-binding protein TGA-2.1 (TGA21).